A 374-amino-acid polypeptide reads, in one-letter code: DNA replication and repair protein RecF (374 aa).

Position 30 to 37 (30 to 37) interacts with ATP; it reads GNNAQGKS.

The protein belongs to the RecF family.

Its subcellular location is the cytoplasm. Its function is as follows. The RecF protein is involved in DNA metabolism; it is required for DNA replication and normal SOS inducibility. RecF binds preferentially to single-stranded, linear DNA. It also seems to bind ATP. This Nostoc punctiforme (strain ATCC 29133 / PCC 73102) protein is DNA replication and repair protein RecF.